We begin with the raw amino-acid sequence, 396 residues long: Pre-mRNA-splicing regulator WTAP (396 aa).

Met-1 is modified (N-acetylmethionine). Ser-14 carries the post-translational modification Phosphoserine. Composition is skewed to low complexity over residues 240 to 257 (QQQQ…TTSS) and 278 to 291 (SNGS…SGSG). The tract at residues 240–396 (QQQQSQASAP…SSVNVQGAVL (157 aa)) is disordered. Residues Ser-297, Ser-305, Ser-306, and Ser-341 each carry the phosphoserine modification. A compositionally biased stretch (low complexity) spans 305–316 (SSSGNGNKASNS). Polar residues predominate over residues 340-351 (DSPTGSENSLTH). At Thr-350 the chain carries Phosphothreonine. Residues 352–368 (HSNDTDSSHDPQEEKAV) show a composition bias toward basic and acidic residues. The span at 380–396 (HVQNGLDSSVNVQGAVL) shows a compositional bias: polar residues. Ser-388 carries the phosphoserine modification.

Belongs to the fl(2)d family. As to quaternary structure, component of the WMM complex, a N6-methyltransferase complex composed of a catalytic subcomplex, named MAC, and of an associated subcomplex, named MACOM. The MAC subcomplex is composed of METTL3 and METTL14. The MACOM subcomplex is composed of WTAP, ZC3H13, CBLL1/HAKAI, VIRMA, and, in some cases of RBM15 (RBM15 or RBM15B). Interacts with WT1. Also a component of a MACOM-like complex, named WTAP complex, composed of WTAP, ZC3H13, CBLL1, VIRMA, RBM15, BCLAF1 and THRAP3. Interacts with CPNE4 (via VWFA domain).

It localises to the nucleus speckle. Its subcellular location is the nucleus. The protein localises to the nucleoplasm. The protein resides in the cytoplasm. In terms of biological role, associated component of the WMM complex, a complex that mediates N6-methyladenosine (m6A) methylation of RNAs, a modification that plays a role in the efficiency of mRNA splicing and RNA processing. Acts as a key regulator of m6A methylation by promoting m6A methylation of mRNAs at the 3'-UTR. Required for accumulation of METTL3 and METTL14 to nuclear speckle. Acts as a mRNA splicing regulator. Regulates G2/M cell-cycle transition by binding to the 3' UTR of CCNA2, which enhances its stability. Impairs WT1 DNA-binding ability and inhibits expression of WT1 target genes. The sequence is that of Pre-mRNA-splicing regulator WTAP from Mus musculus (Mouse).